The chain runs to 2529 residues: Zinc finger FYVE domain-containing protein 26 (2529 aa).

Disordered regions lie at residues 584–650 (HLPE…PGPH), 689–709 (SSHR…SAAR), and 733–810 (VTSN…RFQT). Phosphoserine is present on residues serine 605 and serine 609. The segment covering 689–701 (SSHRTPEETKLPE) has biased composition (basic and acidic residues). Basic residues predominate over residues 755 to 765 (SSLRRGRRTRR). A compositionally biased stretch (low complexity) spans 778–796 (SLEGTSSELSTSTSEGSLS). Serine 791 bears the Phosphoserine mark. Polar residues predominate over residues 797–810 (AVSGQVESDSRFQT). The stretch at 859–884 (MFVERYQEVIQELARVEHKIENQNSD) forms a coiled coil. The interval 1258-1286 (GLPLSTLGSPRPSENPSAERKSHSSPKDS) is disordered. Residues 1263–1273 (TLGSPRPSENP) are compositionally biased toward polar residues. The span at 1274–1283 (SAERKSHSSP) shows a compositional bias: basic and acidic residues. A coiled-coil region spans residues 1488-1515 (VSDMAVQEELKSELQRKLMELRVYQKIL). Phosphoserine is present on residues serine 1732, serine 1754, serine 1770, and serine 1772. The tract at residues 1762–1799 (APGSALVRSPSPKERAFPQTQPPVEFVPPETPPARDQW) is disordered. An FYVE-type zinc finger spans residues 1802–1862 (DETESVCMVC…VCDQCYSYYN (61 aa)). Residues cysteine 1808, cysteine 1811, cysteine 1825, cysteine 1828, cysteine 1833, cysteine 1836, cysteine 1854, and cysteine 1857 each contribute to the Zn(2+) site. The disordered stretch occupies residues 1865-1884 (TPEESPCQSEVPDSAKNESP).

It belongs to the ZFYVE26 family. In terms of assembly, interacts with AP5Z1, AP5B1, AP5S1 and SPG11. Interacts with TTC19 and KIF13A.

It localises to the cytoplasm. The protein resides in the cytoskeleton. It is found in the microtubule organizing center. Its subcellular location is the centrosome. The protein localises to the midbody. In terms of biological role, phosphatidylinositol 3-phosphate-binding protein required for the abscission step in cytokinesis: recruited to the midbody during cytokinesis and acts as a regulator of abscission. May also be required for efficient homologous recombination DNA double-strand break repair. In Mus musculus (Mouse), this protein is Zinc finger FYVE domain-containing protein 26 (Zfyve26).